The following is a 317-amino-acid chain: Olfactory receptor 5K17 (317 aa).

Residues 1–28 (MMKANHSLTVEFILIGFSDHTDLKTLLF) are Extracellular-facing. Residue Asn-5 is glycosylated (N-linked (GlcNAc...) asparagine). A helical transmembrane segment spans residues 29–49 (LLFSAIYLVTIVGNLGLVALI). Topologically, residues 50–56 (YMEPRLH) are cytoplasmic. A helical membrane pass occupies residues 57–77 (TPMYIFLGNLALMDSCCSCAI). At 78–93 (TPKMLENFFSVDRRIS) the chain is on the extracellular side. The chain crosses the membrane as a helical span at residues 94–114 (LYECMVQFYFLCLAETADCFL). A disulfide bridge links Cys-97 with Cys-189. Topologically, residues 115–144 (LAAMAYDRYVAICNPLQYHTMMSKKLSIQM) are cytoplasmic. The helical transmembrane segment at 145-165 (SIGTFIASNLHSLIHTGCLLR) threads the bilayer. The Extracellular segment spans residues 166–198 (LNFCKSRRIDHFFCDILPLYKLSCTDPFINELM). The chain crosses the membrane as a helical span at residues 199-219 (LYIFSMPIQVFTITTVLVSYS). The Cytoplasmic portion of the chain corresponds to 220–239 (CILLTVFKMKSKDGRGKAFS). The chain crosses the membrane as a helical span at residues 240–259 (TCASHFFSVSIFYICLLMYI). Over 260-268 (GPSKNSNKD) the chain is Extracellular. Residues 269–289 (IPVGVFYTIVIPLLNPFIYSL) traverse the membrane as a helical segment. Over 290 to 317 (RNKEVVNAVKKVMKTHSIFKNSSASIAH) the chain is Cytoplasmic.

This sequence belongs to the G-protein coupled receptor 1 family.

It localises to the cell membrane. Potential odorant receptor. In Mus musculus (Mouse), this protein is Olfactory receptor 5K17.